A 114-amino-acid polypeptide reads, in one-letter code: Nucleoid-associated protein PCC8801_2554 (114 aa).

It belongs to the YbaB/EbfC family. As to quaternary structure, homodimer.

The protein localises to the cytoplasm. Its subcellular location is the nucleoid. Functionally, binds to DNA and alters its conformation. May be involved in regulation of gene expression, nucleoid organization and DNA protection. The chain is Nucleoid-associated protein PCC8801_2554 from Rippkaea orientalis (strain PCC 8801 / RF-1) (Cyanothece sp. (strain PCC 8801)).